Consider the following 392-residue polypeptide: Putative nicotinate phosphoribosyltransferase (392 aa).

Residues Y21, F138, and T179 each contribute to the nicotinate site. H182 is subject to Phosphohistidine. Nicotinate is bound at residue R235. Positions 240, 272, and 293 each coordinate 5-phospho-alpha-D-ribose 1-diphosphate. Residues C330, C333, C348, and C350 each contribute to the Zn(2+) site.

Belongs to the NAPRTase family. Highly divergent. Homodimer. Forms a trimer of dimers in the crystal. In terms of processing, transiently phosphorylated on a His residue during the reaction cycle. Phosphorylation strongly increases the affinity for substrates and increases the rate of nicotinate D-ribonucleotide production. Dephosphorylation regenerates the low-affinity form of the enzyme, leading to product release.

The catalysed reaction is nicotinate + 5-phospho-alpha-D-ribose 1-diphosphate + ATP + H2O = nicotinate beta-D-ribonucleotide + ADP + phosphate + diphosphate. Its pathway is cofactor biosynthesis; NAD(+) biosynthesis; nicotinate D-ribonucleotide from nicotinate: step 1/1. Functionally, catalyzes the synthesis of beta-nicotinate D-ribonucleotide from nicotinate and 5-phospho-D-ribose 1-phosphate at the expense of ATP. This is Putative nicotinate phosphoribosyltransferase from Thermoplasma acidophilum (strain ATCC 25905 / DSM 1728 / JCM 9062 / NBRC 15155 / AMRC-C165).